The chain runs to 100 residues: Small ribosomal subunit protein uS14c (100 aa).

The protein belongs to the universal ribosomal protein uS14 family. In terms of assembly, part of the 30S ribosomal subunit.

It is found in the plastid. Its function is as follows. Binds 16S rRNA, required for the assembly of 30S particles. The polypeptide is Small ribosomal subunit protein uS14c (Epifagus virginiana (Beechdrops)).